The primary structure comprises 466 residues: MKIRWIRLSLVAILIIAVVFIGVIGFQKYQFSKSRNKVIMQMDRLMKDQDGGNFRRLDKKENGVEIISYIPKTTEKKDNEIIQKEIGKATDAEVKKLNRDKETQGIIFYTYQKHRMAEQAISYKAVQSEYVKEGRTKFVLKDKKDICKNIVTDAETGALLTLGEVLIKSNQTKLNLKTAVEEELIKTGDFSLKDVGNLGKIKSLVKWNQTDFEITNSEIILPVKIPGAPEPKKVKVKLADIASSVNKRYLPSSVKVPEVPKAKTNKRIALTFDDGPSSSVTPGVLDTLKRHNVKATFFVLGSSVIQNPGLVKRELEEGHQVGSHSWDHPQLTKQSTQEVYNQILKTQKAVFDQTGYFPTTMRPPYGAVNKQVAEEIGLPIIQWSVDTEDWKYRNAGIVTKKVLAGATDGAIVLMHDIHKTTAASLDTTLTKLKSQGYEFVTIDELYGEKLQIGKQYFDKTDSRMVK.

The Cytoplasmic segment spans residues 1-5; the sequence is MKIRW. Residues 6-26 traverse the membrane as a helical segment; sequence IRLSLVAILIIAVVFIGVIGF. Topologically, residues 27-466 are extracellular; sequence QKYQFSKSRN…FDKTDSRMVK (440 aa). The region spanning 266–440 is the NodB homology domain; it reads KRIALTFDDG…KLKSQGYEFV (175 aa). Catalysis depends on aspartate 273, which acts as the Proton acceptor. Aspartate 274, histidine 324, and histidine 328 together coordinate Zn(2+). Residue tyrosine 365 coordinates substrate. Histidine 415 acts as the Proton donor in catalysis.

In terms of assembly, homodimer. Interacts (via transmembrane domain) with PbpA1 (via transmembrane domain); the interaction is important for the peptidoglycan N-deacetylase function of this protein. Requires Zn(2+) as cofactor.

The protein resides in the cell membrane. It is found in the secreted. It localises to the cell wall. The enzyme catalyses peptidoglycan-N-acetyl-D-glucosamine + H2O = peptidoglycan-D-glucosamine + acetate.. In terms of biological role, catalyzes the deacetylation of N-acetylglucosamine (GlcNAc) residues in peptidoglycan (PG). Also deacetylates N-acetylated PG. Does not deacetylate N-acetylmuramic acid. Confers host lysozyme resistance. Critical for virulence and escape from innate immune response of the host. Required for intracellular survival of bacteria in macrophages of the host. Required for successful host colonization. Controls the production of inflammatory mediators in the bone marrow derived macrophages (BMMs) of the infected mouse. Suppresses Toll-like receptor 2 (TLR2)-dependent secretion of interleukin 6 (IL-6) and interferon-beta (IFN-beta) in the macrophages of the infected mouse. May decrease accessibility of pattern recognition receptors (PRRs) such as nucleotide-binding oligomerization domain protein (NOD) 1 of the host to the bacterial cell wall components. Protects cells from autolysis induced by lysozyme or by other autolysis-inducing agents. The protein is Peptidoglycan-N-acetylglucosamine deacetylase PgdA of Listeria monocytogenes serotype 1/2a (strain 10403S).